Consider the following 248-residue polypeptide: Protein canopy homolog 4 (248 aa).

The N-terminal stretch at 1–21 (MGPVRLGILLFLFLAVHEAWA) is a signal peptide. 3 disulfide bridges follow: cysteine 38/cysteine 196, cysteine 41/cysteine 184, and cysteine 94/cysteine 156. The segment at 200–248 (TWTGKEITDGEEKTEGEEEQEEEEEEEEEEGGDKMTKTGSHPKLDREDL) is disordered. Residues 213 to 230 (TEGEEEQEEEEEEEEEEG) are compositionally biased toward acidic residues. A compositionally biased stretch (basic and acidic residues) spans 231–248 (GDKMTKTGSHPKLDREDL).

It belongs to the canopy family. As to quaternary structure, interacts with TLR4.

It is found in the secreted. Its function is as follows. Plays a role in the regulation of the cell surface expression of TLR4. In Homo sapiens (Human), this protein is Protein canopy homolog 4 (CNPY4).